Here is a 311-residue protein sequence, read N- to C-terminus: Mycothiol acetyltransferase (311 aa).

E35 lines the 1D-myo-inositol 2-(L-cysteinylamino)-2-deoxy-alpha-D-glucopyranoside pocket. 79-81 (LVV) contributes to the acetyl-CoA binding site. Positions 155 to 311 (VRTYVGTVDD…TAYALARIDD (157 aa)) constitute an N-acetyltransferase domain. E180, K225, and E235 together coordinate 1D-myo-inositol 2-(L-cysteinylamino)-2-deoxy-alpha-D-glucopyranoside. Residues 239–241 (LGV) and 246–252 (QGRGLGQ) contribute to the acetyl-CoA site. Y278 is a binding site for 1D-myo-inositol 2-(L-cysteinylamino)-2-deoxy-alpha-D-glucopyranoside. Residue 283-288 (NVAAAR) participates in acetyl-CoA binding.

The protein belongs to the acetyltransferase family. MshD subfamily. Monomer.

The enzyme catalyses 1D-myo-inositol 2-(L-cysteinylamino)-2-deoxy-alpha-D-glucopyranoside + acetyl-CoA = mycothiol + CoA + H(+). Catalyzes the transfer of acetyl from acetyl-CoA to desacetylmycothiol (Cys-GlcN-Ins) to form mycothiol. This chain is Mycothiol acetyltransferase, found in Mycobacterium leprae (strain Br4923).